Here is a 362-residue protein sequence, read N- to C-terminus: N5-carboxyaminoimidazole ribonucleotide synthase (362 aa).

Residues arginine 85, lysine 125, 130 to 136 (GYDGRGQ), 158 to 161 (EKFI), glutamate 166, and 244 to 245 (NE) each bind ATP. Residues 89–274 (KSLLDELNLS…QFELHLRALL (186 aa)) enclose the ATP-grasp domain.

The protein belongs to the PurK/PurT family. In terms of assembly, homodimer.

The catalysed reaction is 5-amino-1-(5-phospho-beta-D-ribosyl)imidazole + hydrogencarbonate + ATP = 5-carboxyamino-1-(5-phospho-D-ribosyl)imidazole + ADP + phosphate + 2 H(+). It functions in the pathway purine metabolism; IMP biosynthesis via de novo pathway; 5-amino-1-(5-phospho-D-ribosyl)imidazole-4-carboxylate from 5-amino-1-(5-phospho-D-ribosyl)imidazole (N5-CAIR route): step 1/2. In terms of biological role, catalyzes the ATP-dependent conversion of 5-aminoimidazole ribonucleotide (AIR) and HCO(3)(-) to N5-carboxyaminoimidazole ribonucleotide (N5-CAIR). The protein is N5-carboxyaminoimidazole ribonucleotide synthase of Haemophilus influenzae (strain ATCC 51907 / DSM 11121 / KW20 / Rd).